Reading from the N-terminus, the 337-residue chain is tRNA N6-adenosine threonylcarbamoyltransferase (337 aa).

His-111 and His-115 together coordinate Fe cation. Substrate is bound by residues 134–138 (LVSGG), Asp-167, Gly-180, and Asn-272. Asp-300 serves as a coordination point for Fe cation.

It belongs to the KAE1 / TsaD family. The cofactor is Fe(2+).

The protein resides in the cytoplasm. It catalyses the reaction L-threonylcarbamoyladenylate + adenosine(37) in tRNA = N(6)-L-threonylcarbamoyladenosine(37) in tRNA + AMP + H(+). In terms of biological role, required for the formation of a threonylcarbamoyl group on adenosine at position 37 (t(6)A37) in tRNAs that read codons beginning with adenine. Is involved in the transfer of the threonylcarbamoyl moiety of threonylcarbamoyl-AMP (TC-AMP) to the N6 group of A37, together with TsaE and TsaB. TsaD likely plays a direct catalytic role in this reaction. The chain is tRNA N6-adenosine threonylcarbamoyltransferase from Pectobacterium atrosepticum (strain SCRI 1043 / ATCC BAA-672) (Erwinia carotovora subsp. atroseptica).